A 361-amino-acid chain; its full sequence is Putative geranylgeranyl pyrophosphate synthase 8, chloroplastic (361 aa).

A chloroplast-targeting transit peptide spans 1–39 (MATTVHLSSFSLFIQSRGRRDNSISSVKSLKKRTGLSPS). The tract at residues 24-58 (ISSVKSLKKRTGLSPSSALTSQGGRDMIPPQGKSN) is disordered. Over residues 36–46 (LSPSSALTSQG) the composition is skewed to polar residues. Isopentenyl diphosphate is bound by residues Lys-107, Arg-110, and His-139. The Mg(2+) site is built by Asp-146 and Asp-152. A dimethylallyl diphosphate-binding site is contributed by Arg-157. Arg-158 contributes to the isopentenyl diphosphate binding site. 5 residues coordinate dimethylallyl diphosphate: Lys-246, Thr-247, Gln-284, Lys-301, and Lys-311.

Belongs to the FPP/GGPP synthase family. As to quaternary structure, monomer. Mg(2+) serves as cofactor.

It localises to the plastid. Its subcellular location is the chloroplast. The catalysed reaction is isopentenyl diphosphate + dimethylallyl diphosphate = (2E)-geranyl diphosphate + diphosphate. The enzyme catalyses isopentenyl diphosphate + (2E)-geranyl diphosphate = (2E,6E)-farnesyl diphosphate + diphosphate. It catalyses the reaction isopentenyl diphosphate + (2E,6E)-farnesyl diphosphate = (2E,6E,10E)-geranylgeranyl diphosphate + diphosphate. The protein operates within isoprenoid biosynthesis; farnesyl diphosphate biosynthesis; farnesyl diphosphate from geranyl diphosphate and isopentenyl diphosphate: step 1/1. It participates in isoprenoid biosynthesis; geranyl diphosphate biosynthesis; geranyl diphosphate from dimethylallyl diphosphate and isopentenyl diphosphate: step 1/1. Its pathway is isoprenoid biosynthesis; geranylgeranyl diphosphate biosynthesis; geranylgeranyl diphosphate from farnesyl diphosphate and isopentenyl diphosphate: step 1/1. Its function is as follows. Catalyzes the trans-addition of the three molecules of IPP onto DMAPP to form geranylgeranyl pyrophosphate. This chain is Putative geranylgeranyl pyrophosphate synthase 8, chloroplastic, found in Arabidopsis thaliana (Mouse-ear cress).